The primary structure comprises 473 residues: Aspartyl/glutamyl-tRNA(Asn/Gln) amidotransferase subunit B (473 aa).

Belongs to the GatB/GatE family. GatB subfamily. In terms of assembly, heterotrimer of A, B and C subunits.

The catalysed reaction is L-glutamyl-tRNA(Gln) + L-glutamine + ATP + H2O = L-glutaminyl-tRNA(Gln) + L-glutamate + ADP + phosphate + H(+). The enzyme catalyses L-aspartyl-tRNA(Asn) + L-glutamine + ATP + H2O = L-asparaginyl-tRNA(Asn) + L-glutamate + ADP + phosphate + 2 H(+). Its function is as follows. Allows the formation of correctly charged Asn-tRNA(Asn) or Gln-tRNA(Gln) through the transamidation of misacylated Asp-tRNA(Asn) or Glu-tRNA(Gln) in organisms which lack either or both of asparaginyl-tRNA or glutaminyl-tRNA synthetases. The reaction takes place in the presence of glutamine and ATP through an activated phospho-Asp-tRNA(Asn) or phospho-Glu-tRNA(Gln). This Sulfurisphaera tokodaii (strain DSM 16993 / JCM 10545 / NBRC 100140 / 7) (Sulfolobus tokodaii) protein is Aspartyl/glutamyl-tRNA(Asn/Gln) amidotransferase subunit B.